The sequence spans 103 residues: Large ribosomal subunit protein bL21 (103 aa).

Belongs to the bacterial ribosomal protein bL21 family. As to quaternary structure, part of the 50S ribosomal subunit. Contacts protein L20.

Functionally, this protein binds to 23S rRNA in the presence of protein L20. In Clostridium beijerinckii (strain ATCC 51743 / NCIMB 8052) (Clostridium acetobutylicum), this protein is Large ribosomal subunit protein bL21.